The primary structure comprises 392 residues: Formate-dependent phosphoribosylglycinamide formyltransferase (392 aa).

N(1)-(5-phospho-beta-D-ribosyl)glycinamide contacts are provided by residues 20–21 and Glu80; that span reads EL. ATP-binding positions include Arg112, Lys153, 158–163, 193–196, and Glu201; these read SSGKGQ and EEFI. The ATP-grasp domain occupies 117–306; the sequence is RLAAEELGLP…EFELHVRAIL (190 aa). Mg(2+) contacts are provided by Glu265 and Glu277. Residues Asp284, Lys354, and 361–362 each bind N(1)-(5-phospho-beta-D-ribosyl)glycinamide; that span reads RR.

Belongs to the PurK/PurT family. In terms of assembly, homodimer.

It carries out the reaction N(1)-(5-phospho-beta-D-ribosyl)glycinamide + formate + ATP = N(2)-formyl-N(1)-(5-phospho-beta-D-ribosyl)glycinamide + ADP + phosphate + H(+). Its pathway is purine metabolism; IMP biosynthesis via de novo pathway; N(2)-formyl-N(1)-(5-phospho-D-ribosyl)glycinamide from N(1)-(5-phospho-D-ribosyl)glycinamide (formate route): step 1/1. In terms of biological role, involved in the de novo purine biosynthesis. Catalyzes the transfer of formate to 5-phospho-ribosyl-glycinamide (GAR), producing 5-phospho-ribosyl-N-formylglycinamide (FGAR). Formate is provided by PurU via hydrolysis of 10-formyl-tetrahydrofolate. The polypeptide is Formate-dependent phosphoribosylglycinamide formyltransferase (Geobacter metallireducens (strain ATCC 53774 / DSM 7210 / GS-15)).